The primary structure comprises 321 residues: MRGAQVYRWQIPMDAGVVLRDRRLKTRDGLFVHLQQDDRQGWGEISPLPGFSLESLAEAEAALLAWVNAWRIGESPALPAIPSAAFGISCALAELDGTLPEAADYRAAPLCSGDPDELFESLAAMPGEKIAKVKVGLYEAVRDGMVVNLLLEAIPDLRLRLDANRAWTPLKAQQFAKYVNPDYRDRIAFLEEPCKSRDDSRAFAQETGIAIAWDESLREAGFEFVAEPGVTALVIKPTLTGSLDKVREQVAAAHALGLTAVISSSIESSLGLTQLARIAAWLTPQTIPGLDTLNLMQSQLVRRWPGNPLPYLDIEALEPLL.

The active-site Proton donor is Lys-134. Asp-162, Glu-191, and Asp-214 together coordinate Mg(2+). The active-site Proton acceptor is the Lys-236.

The protein belongs to the mandelate racemase/muconate lactonizing enzyme family. MenC type 1 subfamily. It depends on a divalent metal cation as a cofactor.

The enzyme catalyses (1R,6R)-6-hydroxy-2-succinyl-cyclohexa-2,4-diene-1-carboxylate = 2-succinylbenzoate + H2O. It participates in quinol/quinone metabolism; 1,4-dihydroxy-2-naphthoate biosynthesis; 1,4-dihydroxy-2-naphthoate from chorismate: step 4/7. Its pathway is quinol/quinone metabolism; menaquinone biosynthesis. In terms of biological role, converts 2-succinyl-6-hydroxy-2,4-cyclohexadiene-1-carboxylate (SHCHC) to 2-succinylbenzoate (OSB). This chain is o-succinylbenzoate synthase, found in Enterobacter sp. (strain 638).